Reading from the N-terminus, the 499-residue chain is Endoglucanase 3 (499 aa).

An N-terminal signal peptide occupies residues 1 to 19 (MALLRCLFLLAVLLPHRNA). D88 serves as the catalytic Nucleophile. Catalysis depends on residues H416, D467, and E476.

Belongs to the glycosyl hydrolase 9 (cellulase E) family. In terms of tissue distribution, expressed in flowers.

It is found in the secreted. It catalyses the reaction Endohydrolysis of (1-&gt;4)-beta-D-glucosidic linkages in cellulose, lichenin and cereal beta-D-glucans.. The sequence is that of Endoglucanase 3 (GLU8) from Oryza sativa subsp. japonica (Rice).